Here is a 431-residue protein sequence, read N- to C-terminus: Glutamate-1-semialdehyde 2,1-aminomutase 1 (431 aa).

Position 268 is an N6-(pyridoxal phosphate)lysine (Lys268).

This sequence belongs to the class-III pyridoxal-phosphate-dependent aminotransferase family. HemL subfamily. As to quaternary structure, homodimer. Requires pyridoxal 5'-phosphate as cofactor.

The protein resides in the cytoplasm. It carries out the reaction (S)-4-amino-5-oxopentanoate = 5-aminolevulinate. It functions in the pathway porphyrin-containing compound metabolism; protoporphyrin-IX biosynthesis; 5-aminolevulinate from L-glutamyl-tRNA(Glu): step 2/2. This Bacillus pumilus (strain SAFR-032) protein is Glutamate-1-semialdehyde 2,1-aminomutase 1.